Here is a 361-residue protein sequence, read N- to C-terminus: MKPSIHSLTHQTMQEWVLEQGEKKFRADQIWEWLYRKRVQSFEEMTNLSKDLIAKLNDQFVVNPLKQGIVQESADGTVKYLFELPDGMLIETVLMRQHYGLSVCVTTQVGCNIGCTFCASGLIKKQRDLNNGEIVAQIMLVQKYFAERGQDERVNHIVVMGIGEPFDNYNNVLNFFRTINDDKGMAIGARHITVSTSGLAHKIRNFADEGVQVNLAVSLHAPNNELRSSIMKINRAFPIEKLFAAIEYYIETTNRRVTFEYIMLNEVNDGVEQALELAELLKNIKKLSYVNLIPYTPVSEHDQYSRSPKERVLAFYDTLKKKGVNCVVRQEHGTDIDAAYGQLRSNTMKRDRQKAVAAVNP.

Glu-91 serves as the catalytic Proton acceptor. In terms of domain architecture, Radical SAM core spans 97–329 (QHYGLSVCVT…KKKGVNCVVR (233 aa)). Residues Cys-111, Cys-115, and Cys-118 each contribute to the [4Fe-4S] cluster site. Residues 163-164 (GE), Ser-195, 218-220 (SLH), and Thr-296 each bind S-adenosyl-L-methionine.

It belongs to the radical SAM superfamily. RlmN family. Requires [4Fe-4S] cluster as cofactor.

It localises to the cytoplasm. It carries out the reaction adenosine(2503) in 23S rRNA + 2 reduced [2Fe-2S]-[ferredoxin] + 2 S-adenosyl-L-methionine = 2-methyladenosine(2503) in 23S rRNA + 5'-deoxyadenosine + L-methionine + 2 oxidized [2Fe-2S]-[ferredoxin] + S-adenosyl-L-homocysteine. The enzyme catalyses adenosine(37) in tRNA + 2 reduced [2Fe-2S]-[ferredoxin] + 2 S-adenosyl-L-methionine = 2-methyladenosine(37) in tRNA + 5'-deoxyadenosine + L-methionine + 2 oxidized [2Fe-2S]-[ferredoxin] + S-adenosyl-L-homocysteine. Specifically methylates position 2 of adenine 2503 in 23S rRNA and position 2 of adenine 37 in tRNAs. The protein is Putative dual-specificity RNA methyltransferase RlmN of Streptococcus pneumoniae (strain CGSP14).